The following is a 188-amino-acid chain: Putative glutamine amidotransferase-like protein YvdE homolog (188 aa).

The Glutamine amidotransferase type-1 domain occupies 17–188 (SPFWWNKVSY…IKDLGQGLQA (172 aa)).

This Lactococcus lactis subsp. cremoris (Streptococcus cremoris) protein is Putative glutamine amidotransferase-like protein YvdE homolog.